The sequence spans 127 residues: Glycine cleavage system H protein (127 aa).

One can recognise a Lipoyl-binding domain in the interval 22–104 (KVRIGITDFA…YEKAWMIVIE (83 aa)). Lys63 bears the N6-lipoyllysine mark.

Belongs to the GcvH family. As to quaternary structure, the glycine cleavage system is composed of four proteins: P, T, L and H. (R)-lipoate serves as cofactor.

Functionally, the glycine cleavage system catalyzes the degradation of glycine. The H protein shuttles the methylamine group of glycine from the P protein to the T protein. Its function is as follows. Is also involved in protein lipoylation via its role as an octanoyl/lipoyl carrier protein intermediate. In Geobacillus thermodenitrificans (strain NG80-2), this protein is Glycine cleavage system H protein.